A 211-amino-acid chain; its full sequence is Protein-methionine-sulfoxide reductase heme-binding subunit MsrQ (211 aa).

Helical transmembrane passes span 10–30, 82–102, 116–136, 153–173, and 178–198; these read WLKV…VWAI, LWCF…ELGV, PYLT…FTST, FVYL…KIIS, and IYAG…LSLF.

Belongs to the MsrQ family. Heterodimer of a catalytic subunit (MsrP) and a heme-binding subunit (MsrQ). FMN is required as a cofactor. The cofactor is heme b.

The protein resides in the cell inner membrane. Its function is as follows. Part of the MsrPQ system that repairs oxidized periplasmic proteins containing methionine sulfoxide residues (Met-O), using respiratory chain electrons. Thus protects these proteins from oxidative-stress damage caused by reactive species of oxygen and chlorine generated by the host defense mechanisms. MsrPQ is essential for the maintenance of envelope integrity under bleach stress, rescuing a wide series of structurally unrelated periplasmic proteins from methionine oxidation, including the primary periplasmic chaperone SurA and the lipoprotein Pal. MsrQ provides electrons for reduction to the reductase catalytic subunit MsrP, using the quinone pool of the respiratory chain. The chain is Protein-methionine-sulfoxide reductase heme-binding subunit MsrQ from Escherichia coli (strain 55989 / EAEC).